The following is a 437-amino-acid chain: UDP-N-acetylmuramoylalanine--D-glutamate ligase (437 aa).

112–118 (GSNGKST) is an ATP binding site.

It belongs to the MurCDEF family.

The protein localises to the cytoplasm. It catalyses the reaction UDP-N-acetyl-alpha-D-muramoyl-L-alanine + D-glutamate + ATP = UDP-N-acetyl-alpha-D-muramoyl-L-alanyl-D-glutamate + ADP + phosphate + H(+). It participates in cell wall biogenesis; peptidoglycan biosynthesis. In terms of biological role, cell wall formation. Catalyzes the addition of glutamate to the nucleotide precursor UDP-N-acetylmuramoyl-L-alanine (UMA). In Haemophilus influenzae (strain PittEE), this protein is UDP-N-acetylmuramoylalanine--D-glutamate ligase.